Reading from the N-terminus, the 282-residue chain is E3 ubiquitin-protein ligase SIAH1 (282 aa).

Residues Met-1 to Pro-17 show a composition bias toward polar residues. The tract at residues Met-1–Val-22 is disordered. Position 19 is a phosphoserine; by ATM and ATR (Ser-19). Residues Cys-41 to Arg-76 form an RING-type zinc finger. The interval Val-90–Cys-282 is SBD. The SIAH-type zinc-finger motif lies at Ser-93 to Lys-153. Residues Cys-98, Cys-105, His-117, Cys-121, Cys-128, Cys-135, His-147, and His-152 each contribute to the Zn(2+) site.

Belongs to the SINA (Seven in absentia) family. Homodimer. Component of some large E3 complex composed of UBE2D1, SIAH1, CACYBP/SIP, SKP1, APC and TBL1X. Interacts with UBE2I. Interacts with alpha-tubulin. Interacts with PEG10, which may inhibit its activity. Interacts with PEG3 and HIPK2. Interacts with group 1 glutamate receptors GRM1 and GRM5. Interacts with DAB1, which may inhibit its activity. Interacts with UBE2E2. Interacts with SNCAIP. Interacts with HIPK2; the interaction is promoted by DAZAP2 and results in SIAH1-mediated ubiquitination and subsequent proteasomal degradation of HIPK2. Interacts with DAZAP2; the interaction is decreased following phosphorylation of DAZAP2 by HIPK2. Interacts with GAPDH; leading to stabilize SIAH1. Interacts with Bassoon/BSN and Piccolo/PLCO; these interactions negatively regulate SIAH1 E3 ligase activity. Interacts with DCC. Interacts with AXIN1; catalyzes AXIN1 ubiquitination and subsequent proteasome-mediated ubiquitin-dependent degradation. Phosphorylated on Ser-19 by ATM and ATR. This phosphorylation disrupts SIAH1 interaction with HIPK2, and subsequent proteasomal degradation of HIPK2.

The protein resides in the cytoplasm. Its subcellular location is the nucleus. The catalysed reaction is S-ubiquitinyl-[E2 ubiquitin-conjugating enzyme]-L-cysteine + [acceptor protein]-L-lysine = [E2 ubiquitin-conjugating enzyme]-L-cysteine + N(6)-ubiquitinyl-[acceptor protein]-L-lysine.. The protein operates within protein modification; protein ubiquitination. Functionally, E3 ubiquitin-protein ligase that mediates ubiquitination and subsequent proteasomal degradation of target proteins. E3 ubiquitin ligases accept ubiquitin from an E2 ubiquitin-conjugating enzyme in the form of a thioester and then directly transfers the ubiquitin to targeted substrates. Mediates E3 ubiquitin ligase activity either through direct binding to substrates or by functioning as the essential RING domain subunit of larger E3 complexes. Triggers the ubiquitin-mediated degradation of many substrates, including proteins involved in transcription regulation (ELL2, MYB, POU2AF1, PML and RBBP8), a cell surface receptor (DCC), cytoplasmic signal transduction molecules (KLF10/TIEG1 and NUMB), an antiapoptotic protein (BAG1), a microtubule motor protein (KIF22), a protein involved in synaptic vesicle function in neurons (SYP), a structural protein (CTNNB1) and SNCAIP. Confers constitutive instability to HIPK2 through proteasomal degradation. It is thereby involved in many cellular processes such as apoptosis, tumor suppression, cell cycle, axon guidance, transcription, spermatogenesis and TNF-alpha signaling. Has some overlapping function with SIAH2. Induces apoptosis in cooperation with PEG3. Upon nitric oxid (NO) generation that follows apoptotic stimulation, interacts with S-nitrosylated GAPDH, mediating the translocation of GAPDH to the nucleus. GAPDH acts as a stabilizer of SIAH1, facilitating the degradation of nuclear proteins. Mediates ubiquitination and degradation of EGLN2 and EGLN3 in response to the unfolded protein response (UPR), leading to their degradation and subsequent stabilization of ATF4. Also part of the Wnt signaling pathway in which it mediates the Wnt-induced ubiquitin-mediated proteasomal degradation of AXIN1. The sequence is that of E3 ubiquitin-protein ligase SIAH1 (Siah1) from Rattus norvegicus (Rat).